The chain runs to 402 residues: mRNA cap guanine-N(7) methyltransferase (402 aa).

Over residues 1-11 the composition is skewed to basic and acidic residues; sequence MDHVLNPEEKV. Residues 1 to 75 are disordered; it reads MDHVLNPEEK…PRLEEGHGSL (75 aa). Residues 35-50 are compositionally biased toward polar residues; that stretch reads PKLSASEKSLPGNTKS. Basic and acidic residues predominate over residues 55–72; sequence KAAEPDSPPKRPRLEEGH. An mRNA cap 0 methyltransferase domain is found at 94 to 401; the sequence is SRIFHLRNFN…IYLLFAFEKQ (308 aa). An mRNA-binding site is contributed by 103–104; sequence NN. The S-adenosyl-L-methionine site is built by Lys107, Gly131, Asp153, Asp187, Gln210, and Tyr215.

This sequence belongs to the class I-like SAM-binding methyltransferase superfamily. mRNA cap 0 methyltransferase family.

The protein localises to the nucleus. It carries out the reaction a 5'-end (5'-triphosphoguanosine)-ribonucleoside in mRNA + S-adenosyl-L-methionine = a 5'-end (N(7)-methyl 5'-triphosphoguanosine)-ribonucleoside in mRNA + S-adenosyl-L-homocysteine. Catalytic subunit of the mRNA-capping methyltransferase RNMT:RAMAC complex that methylates the N7 position of the added guanosine to the 5'-cap structure of mRNAs. Binds RNA containing 5'-terminal GpppC. In Xenopus laevis (African clawed frog), this protein is mRNA cap guanine-N(7) methyltransferase (rnmt).